Consider the following 209-residue polypeptide: Ubiquitin-conjugating enzyme E2 S (209 aa).

Residues 14-160 enclose the UBC core domain; sequence QTIRQVMREL…ARMMTEIHAQ (147 aa). Cys-98 acts as the Glycyl thioester intermediate in catalysis. The tract at residues 168–194 is disordered; the sequence is AVGDAKDDGGPSTKKHAGLDKKLQDKK. Basic and acidic residues predominate over residues 184–194; that stretch reads AGLDKKLQDKK.

Belongs to the ubiquitin-conjugating enzyme family.

The catalysed reaction is S-ubiquitinyl-[E1 ubiquitin-activating enzyme]-L-cysteine + [E2 ubiquitin-conjugating enzyme]-L-cysteine = [E1 ubiquitin-activating enzyme]-L-cysteine + S-ubiquitinyl-[E2 ubiquitin-conjugating enzyme]-L-cysteine.. It participates in protein modification; protein ubiquitination. In terms of biological role, catalyzes the covalent attachment of ubiquitin to other proteins. Acts as an essential factor of the anaphase promoting complex/cyclosome (APC/C), a cell cycle-regulated ubiquitin ligase that controls progression through mitosis. Acts by specifically elongating polyubiquitin chains initiated by the E2 enzyme vih/UbcH10 on APC/C substrates, enhancing the degradation of APC/C substrates by the proteasome and promoting mitotic exit. This is Ubiquitin-conjugating enzyme E2 S from Drosophila melanogaster (Fruit fly).